The chain runs to 112 residues: Putative pterin-4-alpha-carbinolamine dehydratase (112 aa).

This sequence belongs to the pterin-4-alpha-carbinolamine dehydratase family.

The catalysed reaction is (4aS,6R)-4a-hydroxy-L-erythro-5,6,7,8-tetrahydrobiopterin = (6R)-L-erythro-6,7-dihydrobiopterin + H2O. This chain is Putative pterin-4-alpha-carbinolamine dehydratase, found in Shewanella sp. (strain ANA-3).